A 479-amino-acid chain; its full sequence is Ribulose bisphosphate carboxylase large chain (479 aa).

A propeptide spanning residues 1–2 (MS) is cleaved from the precursor. Residues N123 and T173 each contribute to the substrate site. K175 functions as the Proton acceptor in the catalytic mechanism. K177 serves as a coordination point for substrate. K201, D203, and E204 together coordinate Mg(2+). The residue at position 201 (K201) is an N6-carboxylysine. A Phosphoserine modification is found at S208. The Proton acceptor role is filled by H294. Residues R295 and H327 each contribute to the substrate site. At T330 the chain carries Phosphothreonine. Substrate is bound at residue S379.

This sequence belongs to the RuBisCO large chain family. Type I subfamily. In terms of assembly, heterohexadecamer of 8 large chains and 8 small chains; disulfide-linked. The disulfide link is formed within the large subunit homodimers. Mg(2+) serves as cofactor. In terms of processing, the disulfide bond which can form in the large chain dimeric partners within the hexadecamer appears to be associated with oxidative stress and protein turnover.

The protein localises to the plastid. The protein resides in the chloroplast. The catalysed reaction is 2 (2R)-3-phosphoglycerate + 2 H(+) = D-ribulose 1,5-bisphosphate + CO2 + H2O. It carries out the reaction D-ribulose 1,5-bisphosphate + O2 = 2-phosphoglycolate + (2R)-3-phosphoglycerate + 2 H(+). Its function is as follows. RuBisCO catalyzes two reactions: the carboxylation of D-ribulose 1,5-bisphosphate, the primary event in carbon dioxide fixation, as well as the oxidative fragmentation of the pentose substrate in the photorespiration process. Both reactions occur simultaneously and in competition at the same active site. This chain is Ribulose bisphosphate carboxylase large chain, found in Brassica oleracea (Wild cabbage).